Reading from the N-terminus, the 2570-residue chain is Stabilin-1 (2570 aa).

The N-terminal stretch at 1–25 is a signal peptide; sequence MAGPRGLLPLCLLAFCLAGFSFVRG. Topologically, residues 26-2478 are extracellular; it reads QVLFKGCDVK…LAPEAPPVAA (2453 aa). EGF-like domains lie at 110–148, 156–193, 195–229, and 232–271; these read HECPGGAETPCNGHGTCLDGMDRNGTCVCQENFRGSACQ, FGPDCQSVCSCVHGVCNHGPRGDGSCLCFAGYTGPHCD, ELPVCQELRCPQNTQCSAEAPSCRCLPGYTQQGSE, and APNPCWPSPCSLLAQCSVSPKGQAQCHCPENYHGDGMVCL. Disulfide bonds link Cys-112–Cys-126, Cys-120–Cys-136, Cys-138–Cys-147, Cys-160–Cys-171, Cys-164–Cys-181, Cys-183–Cys-192, Cys-199–Cys-210, Cys-204–Cys-217, Cys-236–Cys-247, Cys-241–Cys-257, and Cys-259–Cys-270. Asn-133 carries an N-linked (GlcNAc...) asparagine glycan. Asn-286, Asn-312, Asn-413, Asn-606, Asn-673, Asn-712, and Asn-745 each carry an N-linked (GlcNAc...) asparagine glycan. FAS1 domains follow at residues 356-494 and 506-641; these read YGHL…TGLR and KRTI…DGIL. Residues 728-768 enclose the EGF-like 5 domain; that stretch reads DCTQCPGGFSNPCYGKGNCSDGIQGNGACLCFPDYKGIACH. Intrachain disulfides connect Cys-732/Cys-746, Cys-740/Cys-756, and Cys-758/Cys-767. N-linked (GlcNAc...) asparagine glycosylation is present at Asn-816. EGF-like domains are found at residues 818–858, 861–903, 904–946, and 947–986; these read SMGD…DGFS, PSNP…RVCV, AIDE…YQCS, and PIDPCRAGNGGCHGLATCRAVGGGQRVCTCPPGFGGDGFS. Disulfide bonds link Cys-822–Cys-837, Cys-831–Cys-846, Cys-865–Cys-879, Cys-873–Cys-889, Cys-891–Cys-902, Cys-908–Cys-922, Cys-916–Cys-932, Cys-934–Cys-945, Cys-951–Cys-964, and Cys-958–Cys-974. FAS1 domains are found at residues 988 to 1118 and 1128 to 1253; these read YGDI…SQVL and GQGL…SGVL. N-linked (GlcNAc...) asparagine glycans are attached at residues Asn-1087, Asn-1096, Asn-1170, Asn-1178, Asn-1222, and Asn-1274. Positions 1327–1392 constitute a Laminin EGF-like 1 domain; sequence TLCEPCPGGL…CDCAHGLCQE (66 aa). Cystine bridges form between Cys-1332/Cys-1346, Cys-1340/Cys-1356, and Cys-1358/Cys-1367. Asn-1378 is a glycosylation site (N-linked (GlcNAc...) asparagine). Cystine bridges form between Cys-1379/Cys-1390, Cys-1383/Cys-1400, Cys-1402/Cys-1411, Cys-1420/Cys-1430, Cys-1424/Cys-1440, Cys-1442/Cys-1453, Cys-1459/Cys-1472, Cys-1466/Cys-1482, Cys-1484/Cys-1495, Cys-1501/Cys-1514, Cys-1508/Cys-1524, Cys-1526/Cys-1538, Cys-1544/Cys-1557, Cys-1551/Cys-1567, and Cys-1569/Cys-1581. EGF-like domains are found at residues 1416 to 1454, 1455 to 1496, 1497 to 1539, and 1540 to 1582; these read TSPQCPRKCDPNANCVQDSAGASTCACAAGYSGNGIFCS, EVDP…ELCQ, EINS…RTCE, and LLDP…LTCR. N-linked (GlcNAc...) asparagine glycosylation is present at Asn-1471. FAS1 domains follow at residues 1582-1708 and 1724-1864; these read RARV…DRVL and PRRN…DQLL. Asn-1626 and Asn-1727 each carry an N-linked (GlcNAc...) asparagine glycan. The region spanning 1966–2031 is the Laminin EGF-like 2 domain; the sequence is SECQACPGGP…RCTVHGRCDE (66 aa). Cystine bridges form between Cys-1971-Cys-1985, Cys-1979-Cys-1995, Cys-1997-Cys-2006, Cys-2018-Cys-2029, Cys-2023-Cys-2039, Cys-2041-Cys-2050, Cys-2060-Cys-2070, Cys-2064-Cys-2076, Cys-2078-Cys-2089, Cys-2095-Cys-2108, Cys-2102-Cys-2117, Cys-2119-Cys-2130, Cys-2136-Cys-2150, Cys-2144-Cys-2160, and Cys-2162-Cys-2173. EGF-like domains follow at residues 2056 to 2090, 2091 to 2131, and 2132 to 2174; these read LQPVCTPPCAPEAVCRAGNSCECSLGYEGDGRVCT, VADL…WSCR, and ARNP…LQCL. The N-linked (GlcNAc...) asparagine glycan is linked to Asn-2107. Positions 2206 to 2301 constitute a Link domain; that stretch reads RAGVFHLQAT…SERWDAYCFR (96 aa). N-linked (GlcNAc...) asparagine glycans are attached at residues Asn-2222, Asn-2261, Asn-2290, Asn-2334, Asn-2347, Asn-2379, Asn-2393, Asn-2400, and Asn-2424. 2 disulfide bridges follow: Cys-2230/Cys-2299 and Cys-2254/Cys-2275. The region spanning 2322-2459 is the FAS1 7 domain; the sequence is NGKLLDVLAA…GIIHALASPL (138 aa). A helical transmembrane segment spans residues 2479 to 2499; sequence GVGAVLAAGALLGLVAGALYL. Topologically, residues 2500-2570 are cytoplasmic; that stretch reads RARGKPMGFG…PDTQRILTVK (71 aa).

In terms of assembly, interacts with CHID1. In terms of tissue distribution, high levels found in spleen, lymph node, liver and placenta. Also expressed in endothelial cells.

The protein localises to the membrane. Acts as a scavenger receptor for acetylated low density lipoprotein. Binds to both Gram-positive and Gram-negative bacteria and may play a role in defense against bacterial infection. When inhibited in endothelial tube formation assays, there is a marked decrease in cell-cell interactions, suggesting a role in angiogenesis. Involved in the delivery of newly synthesized CHID1/SI-CLP from the biosynthetic compartment to the endosomal/lysosomal system. This is Stabilin-1 (STAB1) from Homo sapiens (Human).